Consider the following 177-residue polypeptide: MSIENLKSALPAYAKDQKLNIGSLTRSTELNEEQLWGSLVAAAAATRNDLVLSEILEEAREHLSEEAVDAALGSATVMAMNNVAYRAKSWLGDDFAQVKFGLRMNIIAKPGVDKATFELWSTVVSAINGCEHCLSAHANTLLEEGVTKEQIWEGIKVAGVVEAVAQALQAEAVRSAE.

C130 functions as the Proton donor in the catalytic mechanism. A disulfide bridge links C130 with C133. Residue C133 is the Cysteine sulfenic acid (-SOH) intermediate of the active site.

This sequence belongs to the AhpD family. In terms of assembly, homotrimer.

The enzyme catalyses N(6)-[(R)-dihydrolipoyl]-L-lysyl-[lipoyl-carrier protein] + a hydroperoxide = N(6)-[(R)-lipoyl]-L-lysyl-[lipoyl-carrier protein] + an alcohol + H2O. Its function is as follows. Antioxidant protein with alkyl hydroperoxidase activity. Required for the reduction of the AhpC active site cysteine residues and for the regeneration of the AhpC enzyme activity. The polypeptide is Alkyl hydroperoxide reductase AhpD (Corynebacterium aurimucosum (strain ATCC 700975 / DSM 44827 / CIP 107346 / CN-1) (Corynebacterium nigricans)).